A 675-amino-acid chain; its full sequence is uncharacterized protein (675 aa).

4 helical membrane passes run 2 to 22 (QHTFIYDTCLWILSILIDFFF), 397 to 417 (LFLLALGALPGAILFSPVFIA), 448 to 468 (LLVALGMTPILYSFYALLCCY), and 481 to 501 (IFVYTVPIISTFLFPMVTYAA). Disordered stretches follow at residues 616–635 (YSPNPSALPPSDEEEKDIND) and 646–675 (QRMGQRMTEIRSRDTPPEEVFSESDEELSD). Positions 665 to 675 (VFSESDEELSD) are enriched in acidic residues. S669 carries the post-translational modification Phosphoserine.

Belongs to the 1-acyl-sn-glycerol-3-phosphate acyltransferase family.

It is found in the endoplasmic reticulum membrane. This is an uncharacterized protein from Schizosaccharomyces pombe (strain 972 / ATCC 24843) (Fission yeast).